The sequence spans 582 residues: MEIQRALVITGIAVVSYLMIQAWQRDYANTASPVPVEQVAEQGNSSSSDSADLPSVQSQTDNSIPSAQSDNDLPSVSPADIAQPTPSSQRIEVNTDVLRVEINPVGGDIVRLALPDYPKHVDTPDQPFVLMDQNSNGTYVAQSGLVGKNGTDSSKGRPHWNSAQQSYRLAEGDNELNVDLTLTQDSGAEIIKRYTFEKGSYLIRVSHIVRNNGSTPWTGALYGQIKRDGRDDPGLSKAGFAPMPTYLGAAYWSADKPYNKLTFDDMSEDDVKLDQTVEGGWLAMVQHYFVSAWIPDAKQKNHYSSVYLKSRDQYLLRFVSPNTTIQPGEESVLYSEFYAGPKQQDNLEAISPGLNMTVDYGWLWFISQPIFALLVFLQSGEVSVFGMDIDIGGGVGNWGVAIILLTLIIKAIFFKLSATSYRSMAKMRKVAPEMQRIKEQNKNDKQKQQMETMNLFKREKINPLGGCLPMLVQMPVFIALYYVLLESVELRQAPFFLWINDLSVMDPYFVLPILMGASMFLQTRLNPTPADPTQAQVMKWMPMIFAVFMLWFPAGLVLYWLTNNILSIAQQWIITRNIENSA.

A helical membrane pass occupies residues isoleucine 3–tryptophan 23. Positions glutamine 38–glutamate 92 are disordered. The span at serine 45–serine 58 shows a compositional bias: low complexity. A compositionally biased stretch (polar residues) spans glutamine 59–proline 74. The next 5 helical transmembrane spans lie at threonine 357–leucine 377, glycine 394–phenylalanine 414, leucine 464–leucine 484, phenylalanine 495–methionine 515, and methionine 541–leucine 561.

It belongs to the OXA1/ALB3/YidC family. Type 1 subfamily. In terms of assembly, interacts with the Sec translocase complex via SecD. Specifically interacts with transmembrane segments of nascent integral membrane proteins during membrane integration.

The protein localises to the cell inner membrane. In terms of biological role, required for the insertion and/or proper folding and/or complex formation of integral membrane proteins into the membrane. Involved in integration of membrane proteins that insert both dependently and independently of the Sec translocase complex, as well as at least some lipoproteins. Aids folding of multispanning membrane proteins. The polypeptide is Membrane protein insertase YidC (Alcanivorax borkumensis (strain ATCC 700651 / DSM 11573 / NCIMB 13689 / SK2)).